The primary structure comprises 339 residues: Serine/threonine-protein kinase SAPK2 (339 aa).

The Protein kinase domain maps to 4–260 (YEVIKDIGSG…IPEIKNHPWF (257 aa)). ATP contacts are provided by residues 10-18 (IGSGNFGVA) and Lys-33. The active-site Proton acceptor is Asp-123. The C-terminal stretch occupies residues 253-339 (EIKNHPWFLK…EDSGDFVCAL (87 aa)).

The protein belongs to the protein kinase superfamily. Ser/Thr protein kinase family. In terms of processing, phosphorylated.

It carries out the reaction L-seryl-[protein] + ATP = O-phospho-L-seryl-[protein] + ADP + H(+). It catalyses the reaction L-threonyl-[protein] + ATP = O-phospho-L-threonyl-[protein] + ADP + H(+). In terms of biological role, may play a role in signal transduction of hyperosmotic response. Can phosphorylate BZIP46 in vitro. This chain is Serine/threonine-protein kinase SAPK2 (SAPK2), found in Oryza sativa subsp. indica (Rice).